The following is a 400-amino-acid chain: Renin (400 aa).

The first 17 residues, 1–17 (MPLWGLLLALWGCSTFS), serve as a signal peptide directing secretion. A propeptide spans 18-59 (LPADTAAFRRIFLKKMPSVRESLKERGVDMAQLGAEWSQLTK) (activation peptide). The N-linked (GlcNAc...) asparagine glycan is linked to asparagine 65. A Peptidase A1 domain is found at 80–397 (YYGEIGIGTP…DRRNNRIGFA (318 aa)). Aspartate 98 is a catalytic residue. Residues cysteine 111 and cysteine 118 are joined by a disulfide bond. Asparagine 135 carries N-linked (GlcNAc...) asparagine glycosylation. Residues cysteine 277 and cysteine 281 are joined by a disulfide bond. Aspartate 286 is a catalytic residue. Cysteine 320 and cysteine 356 are disulfide-bonded. Residue asparagine 353 is glycosylated (N-linked (GlcNAc...) asparagine).

This sequence belongs to the peptidase A1 family. In terms of assembly, interacts with ATP6AP2. As to expression, kidney.

The protein localises to the secreted. It localises to the membrane. The enzyme catalyses Cleavage of Leu-|-Xaa bond in angiotensinogen to generate angiotensin I.. Its activity is regulated as follows. Interaction with ATP6AP2 results in a 5-fold increased efficiency in angiotensinogen processing. Functionally, renin is a highly specific endopeptidase, whose only known function is to generate angiotensin I from angiotensinogen in the plasma, initiating a cascade of reactions that produce an elevation of blood pressure and increased sodium retention by the kidney. The polypeptide is Renin (REN) (Ovis aries (Sheep)).